The sequence spans 415 residues: CCA-adding enzyme (415 aa).

ATP-binding residues include Ser52 and Arg55. Residues Ser52 and Arg55 each contribute to the CTP site. Mg(2+)-binding residues include Asp64, Asp66, and Asp116. ATP-binding residues include His139, Lys159, and Tyr168. His139, Lys159, and Tyr168 together coordinate CTP.

Belongs to the tRNA nucleotidyltransferase/poly(A) polymerase family. Archaeal CCA-adding enzyme subfamily. In terms of assembly, homodimer. Requires Mg(2+) as cofactor.

The enzyme catalyses a tRNA precursor + 2 CTP + ATP = a tRNA with a 3' CCA end + 3 diphosphate. It carries out the reaction a tRNA with a 3' CCA end + 2 CTP + ATP = a tRNA with a 3' CCACCA end + 3 diphosphate. Its function is as follows. Catalyzes the addition and repair of the essential 3'-terminal CCA sequence in tRNAs without using a nucleic acid template. Adds these three nucleotides in the order of C, C, and A to the tRNA nucleotide-73, using CTP and ATP as substrates and producing inorganic pyrophosphate. tRNA 3'-terminal CCA addition is required both for tRNA processing and repair. Also involved in tRNA surveillance by mediating tandem CCA addition to generate a CCACCA at the 3' terminus of unstable tRNAs. While stable tRNAs receive only 3'-terminal CCA, unstable tRNAs are marked with CCACCA and rapidly degraded. The sequence is that of CCA-adding enzyme from Pyrobaculum neutrophilum (strain DSM 2338 / JCM 9278 / NBRC 100436 / V24Sta) (Thermoproteus neutrophilus).